A 444-amino-acid polypeptide reads, in one-letter code: Tubulin beta-2 chain (444 aa).

Residues Q11, E69, S138, G142, T143, G144, N204, and N226 each coordinate GTP. E69 is a binding site for Mg(2+).

Belongs to the tubulin family. In terms of assembly, dimer of alpha and beta chains. A typical microtubule is a hollow water-filled tube with an outer diameter of 25 nm and an inner diameter of 15 nM. Alpha-beta heterodimers associate head-to-tail to form protofilaments running lengthwise along the microtubule wall with the beta-tubulin subunit facing the microtubule plus end conferring a structural polarity. Microtubules usually have 13 protofilaments but different protofilament numbers can be found in some organisms and specialized cells. It depends on Mg(2+) as a cofactor.

It is found in the cytoplasm. Its subcellular location is the cytoskeleton. Tubulin is the major constituent of microtubules, a cylinder consisting of laterally associated linear protofilaments composed of alpha- and beta-tubulin heterodimers. Microtubules grow by the addition of GTP-tubulin dimers to the microtubule end, where a stabilizing cap forms. Below the cap, tubulin dimers are in GDP-bound state, owing to GTPase activity of alpha-tubulin. The polypeptide is Tubulin beta-2 chain (TUBB2) (Zea mays (Maize)).